Here is a 608-residue protein sequence, read N- to C-terminus: Prolactin receptor (608 aa).

An N-terminal signal peptide occupies residues 1–19 (MSSALAYMLLVLSISLLNG). The Extracellular segment spans residues 20–229 (QSPPGKPEIH…EIPNDFTLKD (210 aa)). 2 Fibronectin type-III domains span residues 22 to 122 (PPGK…IVEP) and 124 to 224 (PPRN…IPND). Cys31 and Cys41 are disulfide-bonded. Asn54 is a glycosylation site (N-linked (GlcNAc...) asparagine). A disulfide bond links Cys70 and Cys81. 2 N-linked (GlcNAc...) asparagine glycosylation sites follow: Asn99 and Asn127. Zn(2+) is bound by residues Asp206 and His207. Residues 210–214 (WSRWG) carry the WSXWS motif motif. Residues 230-253 (TTVWIIVAVLSAVICLIMVWAVAL) traverse the membrane as a helical segment. Residues 254–608 (KGYSMMTCIF…DPTCFMHSFH (355 aa)) are Cytoplasmic-facing. Positions 262–270 (IFPPVPGPK) match the Box 1 motif motif. Disordered regions lie at residues 317 to 355 (DERL…HSLL), 377 to 419 (KPEN…TRRS), and 466 to 487 (GAKS…EKGP). A compositionally biased stretch (basic and acidic residues) spans 318–327 (ERLMPSHSKE). The segment covering 345-354 (GHGSYDSHSL) has biased composition (low complexity). Residues 398-408 (CHTDTSKSTTW) show a composition bias toward polar residues.

It belongs to the type I cytokine receptor family. Type 1 subfamily. As to quaternary structure, interacts with SMARCA1. Interacts with NEK3 and VAV2 and this interaction is prolactin-dependent.

Its subcellular location is the membrane. Functionally, this is a receptor for the anterior pituitary hormone prolactin. The sequence is that of Prolactin receptor (Prlr) from Mus musculus (Mouse).